Reading from the N-terminus, the 267-residue chain is Probable ribosomal RNA small subunit methyltransferase A (267 aa).

S-adenosyl-L-methionine is bound by residues L12, G37, E58, D83, and N100.

Belongs to the class I-like SAM-binding methyltransferase superfamily. rRNA adenine N(6)-methyltransferase family. RsmA subfamily.

The protein localises to the cytoplasm. Specifically dimethylates two adjacent adenosines in the loop of a conserved hairpin near the 3'-end of 16S rRNA in the 30S particle. May play a critical role in biogenesis of 30S subunits. The polypeptide is Probable ribosomal RNA small subunit methyltransferase A (Methanococcus vannielii (strain ATCC 35089 / DSM 1224 / JCM 13029 / OCM 148 / SB)).